The sequence spans 611 residues: Pescadillo homolog (611 aa).

Positions 310–335 (VQMGDPDEASPGEEEQFVAHASKSAP) are disordered. The span at 314–325 (DPDEASPGEEEQ) shows a compositional bias: acidic residues. Residues 354–455 (PSSRLFAPYT…KILLEDTYAQ (102 aa)) enclose the BRCT domain. Disordered regions lie at residues 469–506 (YEGA…ESNT) and 545–611 (VKKA…AGGK). Over residues 482–498 (ADMDVETDGEEGEADAS) the composition is skewed to acidic residues. 2 stretches are compositionally biased toward basic and acidic residues: residues 552 to 569 (KKPD…KDMN) and 579 to 602 (KLYE…EQRK). A coiled-coil region spans residues 580-609 (LYEKMKYSQQKKAAEKEKLEQRKKQLQKAG).

This sequence belongs to the pescadillo family. In terms of assembly, component of the NOP7 complex, composed of ERB1, NOP7 and YTM1. The complex is held together by ERB1, which interacts with NOP7 via its N-terminal domain and with YTM1 via a high-affinity interaction between the seven-bladed beta-propeller domains of the 2 proteins. The NOP7 complex associates with the 66S pre-ribosome.

It is found in the nucleus. The protein localises to the nucleolus. It localises to the nucleoplasm. Its function is as follows. Component of the NOP7 complex, which is required for maturation of the 25S and 5.8S ribosomal RNAs and formation of the 60S ribosome. This chain is Pescadillo homolog, found in Coprinopsis cinerea (strain Okayama-7 / 130 / ATCC MYA-4618 / FGSC 9003) (Inky cap fungus).